The primary structure comprises 144 residues: Putative pre-16S rRNA nuclease (144 aa).

The protein belongs to the YqgF nuclease family.

The protein resides in the cytoplasm. Functionally, could be a nuclease involved in processing of the 5'-end of pre-16S rRNA. This is Putative pre-16S rRNA nuclease from Chlorobium phaeobacteroides (strain BS1).